Consider the following 506-residue polypeptide: ESX-5 secretion system ATPase EccB5 (506 aa).

The helical transmembrane segment at 56-76 (VVASVSAALVICLGALLWSFI) threads the bilayer.

Belongs to the EccB family. In terms of assembly, part of the ESX-5 / type VII secretion system (T7SS), which is composed of cytosolic and membrane components. The ESX-5 membrane complex is composed of EccB5, EccC5, EccD5 and EccE5.

The protein resides in the cell inner membrane. In terms of biological role, an ATPase. Part of the ESX-5 specialized secretion system, which is responsible for the secretion of EsxN and a number of PE_PGRS and PPE proteins, including PPE41. The protein is ESX-5 secretion system ATPase EccB5 of Mycobacterium tuberculosis (strain CDC 1551 / Oshkosh).